Reading from the N-terminus, the 339-residue chain is Tetraacyldisaccharide 4'-kinase (339 aa).

62–69 (VAGGTGKT) lines the ATP pocket.

The protein belongs to the LpxK family.

It catalyses the reaction a lipid A disaccharide + ATP = a lipid IVA + ADP + H(+). It functions in the pathway glycolipid biosynthesis; lipid IV(A) biosynthesis; lipid IV(A) from (3R)-3-hydroxytetradecanoyl-[acyl-carrier-protein] and UDP-N-acetyl-alpha-D-glucosamine: step 6/6. Transfers the gamma-phosphate of ATP to the 4'-position of a tetraacyldisaccharide 1-phosphate intermediate (termed DS-1-P) to form tetraacyldisaccharide 1,4'-bis-phosphate (lipid IVA). The sequence is that of Tetraacyldisaccharide 4'-kinase from Xylella fastidiosa (strain M12).